Consider the following 606-residue polypeptide: Transmembrane 9 superfamily member 1 (606 aa).

The first 27 residues, 1–27 (MTVLGHPRSWSCRWWPLLLLLLLTGRE), serve as a signal peptide directing secretion. A glycan (N-linked (GlcNAc...) asparagine) is linked at asparagine 178. Transmembrane regions (helical) follow at residues 237–257 (LSII…AVIL), 310–330 (VLGV…MALL), 339–359 (GAIN…SGYV), and 373–393 (VWNI…TWSV). N-linked (GlcNAc...) asparagine glycosylation is present at asparagine 401. The next 4 helical transmembrane spans lie at 412 to 432 (ILLL…IGGI), 469 to 489 (VGGF…FATV), 499 to 519 (GILF…SIAL), and 535 to 555 (SVLS…FYYA). Asparagine 559 carries an N-linked (GlcNAc...) asparagine glycan. A helical transmembrane segment spans residues 570–590 (FGYSLLTGYVFFLMLGTISFF).

The protein belongs to the nonaspanin (TM9SF) (TC 9.A.2) family.

It is found in the lysosome membrane. The protein resides in the cytoplasmic vesicle. The protein localises to the autophagosome membrane. Its function is as follows. Plays an essential role in autophagy. In Bos taurus (Bovine), this protein is Transmembrane 9 superfamily member 1 (TM9SF1).